The chain runs to 385 residues: Methylthioribose-1-phosphate isomerase (385 aa).

Aspartate 256 serves as the catalytic Proton donor.

It belongs to the eIF-2B alpha/beta/delta subunits family. MtnA subfamily.

The protein resides in the cytoplasm. It is found in the nucleus. It carries out the reaction 5-(methylsulfanyl)-alpha-D-ribose 1-phosphate = 5-(methylsulfanyl)-D-ribulose 1-phosphate. It participates in amino-acid biosynthesis; L-methionine biosynthesis via salvage pathway; L-methionine from S-methyl-5-thio-alpha-D-ribose 1-phosphate: step 1/6. Its function is as follows. Catalyzes the interconversion of methylthioribose-1-phosphate (MTR-1-P) into methylthioribulose-1-phosphate (MTRu-1-P). The chain is Methylthioribose-1-phosphate isomerase from Arthroderma otae (strain ATCC MYA-4605 / CBS 113480) (Microsporum canis).